A 118-amino-acid polypeptide reads, in one-letter code: MISKPDKNKIRQRRHLRVRGKISGTAERPRLSVYRSNKNIYAQLIDDVKGVTLASASTNDSEVSGKTKTEQASGVGALIAKRANEKNITEVVFDRGGYLYHGRVQALAEAARENGLKF.

This sequence belongs to the universal ribosomal protein uL18 family. As to quaternary structure, part of the 50S ribosomal subunit; part of the 5S rRNA/L5/L18/L25 subcomplex. Contacts the 5S and 23S rRNAs.

This is one of the proteins that bind and probably mediate the attachment of the 5S RNA into the large ribosomal subunit, where it forms part of the central protuberance. This Limosilactobacillus reuteri (strain DSM 20016) (Lactobacillus reuteri) protein is Large ribosomal subunit protein uL18.